Consider the following 401-residue polypeptide: S-adenosylmethionine synthase (401 aa).

136–141 (GQGSVD) is a binding site for ATP.

The protein belongs to the AdoMet synthase 2 family. Mg(2+) is required as a cofactor.

The catalysed reaction is L-methionine + ATP + H2O = S-adenosyl-L-methionine + phosphate + diphosphate. It functions in the pathway amino-acid biosynthesis; S-adenosyl-L-methionine biosynthesis; S-adenosyl-L-methionine from L-methionine: step 1/1. In terms of biological role, catalyzes the formation of S-adenosylmethionine from methionine and ATP. The protein is S-adenosylmethionine synthase (mat) of Pyrococcus horikoshii (strain ATCC 700860 / DSM 12428 / JCM 9974 / NBRC 100139 / OT-3).